The following is a 93-amino-acid chain: Putative pterin-4-alpha-carbinolamine dehydratase (93 aa).

It belongs to the pterin-4-alpha-carbinolamine dehydratase family.

The enzyme catalyses (4aS,6R)-4a-hydroxy-L-erythro-5,6,7,8-tetrahydrobiopterin = (6R)-L-erythro-6,7-dihydrobiopterin + H2O. The protein is Putative pterin-4-alpha-carbinolamine dehydratase of Nostoc punctiforme (strain ATCC 29133 / PCC 73102).